The following is a 126-amino-acid chain: Protein ApaG (126 aa).

Residues Asn-2–His-126 enclose the ApaG domain.

The protein is Protein ApaG of Shewanella pealeana (strain ATCC 700345 / ANG-SQ1).